Here is a 120-residue protein sequence, read N- to C-terminus: MTSKKELLKETMRHRLEQKHCKFLSDALGETHPSVEQQRIRAACVAFDLERLATLSTARALLDVSTRRASDAQKRTALTKGLLDGDTFYESNDALIEINDRVAELKDNVLDAARSVSEDP.

The protein belongs to the herpesviridae UL96 family.

This Cavia porcellus (Guinea pig) protein is Protein GP96.